The chain runs to 437 residues: Double-stranded RNA-binding protein 3 (437 aa).

The tract at residues 1-22 (MKKKSAPTPLPPETANTSPAPI) is disordered. DRBM domains are found at residues 35–104 (VFKS…EIVK) and 120–187 (LCKN…AIQG). Basic and acidic residues-rich tracts occupy residues 288 to 310 (AKRV…ENQH) and 320 to 330 (DEARVEQEPSR). Residues 288–331 (AKRVEDEPPRDIEMVQPDKENQHSDAALVQPDDEARVEQEPSRD) are disordered.

In terms of biological role, binds double-stranded RNA. The sequence is that of Double-stranded RNA-binding protein 3 (DRB3) from Oryza sativa subsp. japonica (Rice).